Reading from the N-terminus, the 453-residue chain is L-cysteine:1D-myo-inositol 2-amino-2-deoxy-alpha-D-glucopyranoside ligase (453 aa).

Zn(2+) is bound at residue Cys58. Residues 58-61 (CGIT), Thr73, and 96-98 (NVT) contribute to the L-cysteinyl-5'-AMP site. Residues 60 to 70 (ITPYDATHMGH) carry the 'HIGH' region motif. The short motif at 221 to 226 (ERGGDP) is the 'ERGGDP' region element. An L-cysteinyl-5'-AMP-binding site is contributed by Trp262. Cys266 serves as a coordination point for Zn(2+). 284 to 286 (GND) serves as a coordination point for L-cysteinyl-5'-AMP. His291 serves as a coordination point for Zn(2+). Val317 contributes to the L-cysteinyl-5'-AMP binding site. The 'KMSKS' region motif lies at 323–327 (KMSKS).

The protein belongs to the class-I aminoacyl-tRNA synthetase family. MshC subfamily. Monomer. Zn(2+) serves as cofactor.

The catalysed reaction is 1D-myo-inositol 2-amino-2-deoxy-alpha-D-glucopyranoside + L-cysteine + ATP = 1D-myo-inositol 2-(L-cysteinylamino)-2-deoxy-alpha-D-glucopyranoside + AMP + diphosphate + H(+). Functionally, catalyzes the ATP-dependent condensation of GlcN-Ins and L-cysteine to form L-Cys-GlcN-Ins. The protein is L-cysteine:1D-myo-inositol 2-amino-2-deoxy-alpha-D-glucopyranoside ligase of Rothia mucilaginosa (strain DY-18) (Stomatococcus mucilaginosus).